The chain runs to 569 residues: Proline--tRNA ligase (569 aa).

The protein belongs to the class-II aminoacyl-tRNA synthetase family. ProS type 1 subfamily. In terms of assembly, homodimer.

Its subcellular location is the cytoplasm. It carries out the reaction tRNA(Pro) + L-proline + ATP = L-prolyl-tRNA(Pro) + AMP + diphosphate. Functionally, catalyzes the attachment of proline to tRNA(Pro) in a two-step reaction: proline is first activated by ATP to form Pro-AMP and then transferred to the acceptor end of tRNA(Pro). As ProRS can inadvertently accommodate and process non-cognate amino acids such as alanine and cysteine, to avoid such errors it has two additional distinct editing activities against alanine. One activity is designated as 'pretransfer' editing and involves the tRNA(Pro)-independent hydrolysis of activated Ala-AMP. The other activity is designated 'posttransfer' editing and involves deacylation of mischarged Ala-tRNA(Pro). The misacylated Cys-tRNA(Pro) is not edited by ProRS. The polypeptide is Proline--tRNA ligase (Campylobacter jejuni subsp. jejuni serotype O:2 (strain ATCC 700819 / NCTC 11168)).